The primary structure comprises 397 residues: Tryptophan synthase beta chain (397 aa).

Lys-87 is subject to N6-(pyridoxal phosphate)lysine.

This sequence belongs to the TrpB family. In terms of assembly, tetramer of two alpha and two beta chains. It depends on pyridoxal 5'-phosphate as a cofactor.

The enzyme catalyses (1S,2R)-1-C-(indol-3-yl)glycerol 3-phosphate + L-serine = D-glyceraldehyde 3-phosphate + L-tryptophan + H2O. The protein operates within amino-acid biosynthesis; L-tryptophan biosynthesis; L-tryptophan from chorismate: step 5/5. Functionally, the beta subunit is responsible for the synthesis of L-tryptophan from indole and L-serine. This chain is Tryptophan synthase beta chain, found in Cronobacter sakazakii (strain ATCC BAA-894) (Enterobacter sakazakii).